We begin with the raw amino-acid sequence, 396 residues long: Agropine synthesis cyclase (396 aa).

Belongs to the peptidase M24B family.

In Rhizobium rhizogenes (Agrobacterium rhizogenes), this protein is Agropine synthesis cyclase (ags).